The sequence spans 435 residues: 5-hydroxybenzimidazole synthase (435 aa).

Substrate contacts are provided by residues Met95, Tyr124, His163, 186–188 (SKG), 227–230 (NGLR), and Glu266. Zn(2+) is bound at residue His270. Residue Tyr293 coordinates substrate. His334 provides a ligand contact to Zn(2+). Residues Cys410, Cys413, and Cys417 each contribute to the [4Fe-4S] cluster site.

The protein belongs to the ThiC family. 5-hydroxybenzimidazole synthase subfamily. As to quaternary structure, homodimer. Requires [4Fe-4S] cluster as cofactor.

The catalysed reaction is 5-amino-1-(5-phospho-beta-D-ribosyl)imidazole + AH2 + S-adenosyl-L-methionine = 5-hydroxybenzimidazole + 5'-deoxyadenosine + formate + L-methionine + A + NH4(+) + phosphate + 2 H(+). Its function is as follows. Catalyzes the conversion of aminoimidazole ribotide (AIR) to 5-hydroxybenzimidazole (5-HBI) in a radical S-adenosyl-L-methionine (SAM)-dependent reaction. Is thus involved in the anaerobic biosynthesis of the benzimidazole lower axial ligand of the cobamide produced by G.sulfurreducens. The chain is 5-hydroxybenzimidazole synthase from Geobacter sulfurreducens (strain ATCC 51573 / DSM 12127 / PCA).